Consider the following 130-residue polypeptide: MSNKHPLVQVIENAQLIERPSFAPGDTVVVQVKVREGERERLQAFEGVVIAKRNRGLNSAFTVRKISSGVGVERAFQLHSPIIDSIEVKRRGAVRRAKLYYLRERSGKSARIREKLAPRAPKVVKPKADA.

This sequence belongs to the bacterial ribosomal protein bL19 family.

This protein is located at the 30S-50S ribosomal subunit interface and may play a role in the structure and function of the aminoacyl-tRNA binding site. The polypeptide is Large ribosomal subunit protein bL19 (Psychrobacter arcticus (strain DSM 17307 / VKM B-2377 / 273-4)).